Consider the following 310-residue polypeptide: HPr kinase/phosphorylase (310 aa).

Residues His136 and Lys157 contribute to the active site. 151 to 158 provides a ligand contact to ATP; the sequence is GDSGIGKS. Ser158 is a binding site for Mg(2+). Catalysis depends on Asp175, which acts as the Proton acceptor; for phosphorylation activity. Proton donor; for dephosphorylation activity. Residues 199 to 208 form an important for the catalytic mechanism of both phosphorylation and dephosphorylation region; it reads LEIRGLGIIN. Residue Glu200 coordinates Mg(2+). Arg241 is an active-site residue. The tract at residues 262–267 is important for the catalytic mechanism of dephosphorylation; the sequence is PVRPGR.

This sequence belongs to the HPrK/P family. In terms of assembly, homohexamer. The cofactor is Mg(2+).

It catalyses the reaction [HPr protein]-L-serine + ATP = [HPr protein]-O-phospho-L-serine + ADP + H(+). The enzyme catalyses [HPr protein]-O-phospho-L-serine + phosphate + H(+) = [HPr protein]-L-serine + diphosphate. Catalyzes the ATP- as well as the pyrophosphate-dependent phosphorylation of a specific serine residue in HPr, a phosphocarrier protein of the phosphoenolpyruvate-dependent sugar phosphotransferase system (PTS). HprK/P also catalyzes the pyrophosphate-producing, inorganic phosphate-dependent dephosphorylation (phosphorolysis) of seryl-phosphorylated HPr (P-Ser-HPr). The two antagonistic activities of HprK/P are regulated by several intracellular metabolites, which change their concentration in response to the absence or presence of rapidly metabolisable carbon sources (glucose, fructose, etc.) in the growth medium. Therefore, by controlling the phosphorylation state of HPr, HPrK/P is a sensor enzyme that plays a major role in the regulation of carbon metabolism and sugar transport: it mediates carbon catabolite repression (CCR), and regulates PTS-catalyzed carbohydrate uptake and inducer exclusion. This chain is HPr kinase/phosphorylase, found in Staphylococcus epidermidis (strain ATCC 35984 / DSM 28319 / BCRC 17069 / CCUG 31568 / BM 3577 / RP62A).